Consider the following 136-residue polypeptide: MGGETKVFTLAEVSQHNNAKDCWLVISGKVYDVTKFLDDHPGGDEVLLSATGKDATDDFEDVGHSSSARAMLDEYYVGDIDSATIPTKTKYTPPNQPHYNQDKTSEFVVKLLQFLVPLIILGVAFGIRFYTKQSSA.

Residues 5 to 81 (TKVFTLAEVS…LDEYYVGDID (77 aa)) enclose the Cytochrome b5 heme-binding domain. Heme-binding residues include His-40 and His-64. Residues 107–127 (FVVKLLQFLVPLIILGVAFGI) form a helical membrane-spanning segment.

It belongs to the cytochrome b5 family. As to expression, is highly expressed in developing seeds, moderately expressed in flowers, and is expressed at low levels in the leaf.

It is found in the endoplasmic reticulum membrane. The protein localises to the microsome membrane. Cytochrome b5 is a membrane bound hemoprotein which function as an electron carrier for several membrane bound oxygenases. May play a key role in the modification by desaturation of fatty acids in the endoplasmic reticulum, which in the developing seed is utilized for membrane synthesis and in the developmentally regulated production of large amounts of storage lipids. Is involved in the reduction of cytochrome P-450 and may therefore be involved in flavonoid biosynthesis in the petals. The protein is Cytochrome b5 of Nicotiana tabacum (Common tobacco).